Consider the following 1135-residue polypeptide: Integrin alpha-7 (1135 aa).

The signal sequence occupies residues 1 to 33; that stretch reads MARIPRCDFLGLPGICYLLSFLLAGLLLPRASA. Residues 34-1036 are Extracellular-facing; the sequence is FNLDVMGAIR…VAVVAEGVPW (1003 aa). FG-GAP repeat units follow at residues 38–103, 110–165, 185–238, 248–305, 306–367, 368–423, and 427–486; these read VMGA…ETDC, RGAN…RCFV, EGRP…DPDQ, DRLT…ASRL, IPEV…HWAD, ISPL…GVVT, and QVLE…IDPR. Asn-86 carries N-linked (GlcNAc...) asparagine glycosylation. Cystine bridges form between Cys-94–Cys-103, Cys-140–Cys-163, and Cys-184–Cys-197. Positions 328, 330, 332, 336, 390, 392, 394, 398, 448, 450, 452, 454, and 456 each coordinate Ca(2+). 6 disulfides stabilise this stretch: Cys-495–Cys-502, Cys-508–Cys-571, Cys-637–Cys-643, Cys-736–Cys-747, Cys-894–Cys-948, and Cys-955–Cys-960. N-linked (GlcNAc...) asparagine glycosylation is present at Asn-741. Residues 905–916 are compositionally biased toward basic and acidic residues; that stretch reads VDSRDRRRRELG. Positions 905 to 933 are disordered; the sequence is VDSRDRRRRELGQPEPQEPPEKVEPSTSW. A glycan (N-linked (GlcNAc...) asparagine) is linked at Asn-943. Asn-979 and Asn-999 each carry an N-linked (GlcNAc...) asparagine glycan. A helical membrane pass occupies residues 1037-1057; it reads WVILLAVLAGLLVLALLVLLL. Residues 1058–1135 are Cytoplasmic-facing; sequence WKLGFFKRAK…PDGHPVSVTA (78 aa). Residues 1061-1065 carry the GFFKR motif motif; it reads GFFKR. Repeat copies occupy residues 1111 to 1114, 1119 to 1122, and 1127 to 1130. The segment at 1111 to 1130 is 3 X 4 AA repeats of D-X-H-P; that stretch reads DAHPILAADWHPELGPDGHP.

This sequence belongs to the integrin alpha chain family. Interacts (via C-terminus intracellular tail region) with CIB1; the interaction is stabilized/increased in a calcium- and magnesium-dependent manner. Heterodimer of an alpha and a beta subunit. The alpha subunit is composed of a heavy and a light chain linked by a disulfide bond. Alpha-7 associates with beta-1. Interacts with COMP. In terms of processing, ADP-ribosylated on at least two sites of the extracellular domain in skeletal myotubes. Post-translationally, a 70 kDa form is created by proteolytic cleavage. Cleavage is elevated during myogenic differentiation and the cleaved form enhances cell adhesion and spreading on laminin. Expressed in skeletal and cardiac muscle. Expressed in replicating myoblasts. In differentiated muscle fibers localizes between fibers and the surrounding matrix. Isoform Alpha-7X1A and isoform Alpha-7X1B are expressed at myotendinous and neuromuscular junctions; isoform Alpha-7X1C is expressed at neuromuscular junctions and at extrasynaptic sites.

It localises to the membrane. In terms of biological role, integrin alpha-7/beta-1 is the primary laminin receptor on skeletal myoblasts and adult myofibers. During myogenic differentiation, it may induce changes in the shape and mobility of myoblasts, and facilitate their localization at laminin-rich sites of secondary fiber formation. Involved in the maintenance of the myofibers cytoarchitecture as well as for their anchorage, viability and functional integrity. Required to promote contractile phenotype acquisition in differentiated airway smooth muscle (ASM) cells. Acts as a Schwann cell receptor for laminin-2. Acts as a receptor of COMP and mediates its effect on vascular smooth muscle cells (VSMCs) maturation. In Rattus norvegicus (Rat), this protein is Integrin alpha-7 (Itga7).